Consider the following 473-residue polypeptide: MAAPVMTVSDSKDLRGLNLIAAHSHIRGLGVDATTLEPRASSQGLVGQEKARKAAAVMLQMIKEGKIAGRAVLIAGPPSTGKTAIAMGMAQSLGPDVPFTTLASSEIFSLEMSKTEALTQAFRKSIGVRIKEESEIMEGEVVEIQIDRSVTGSAKQGKLTIKTTDMEAVYDMGSKMIDAMTKERVMAGDIISIDKSSGKITKLGRSYARSRDYDAMGVDTKFLQCPDGELQKRKEVVHTVTLHEIDVINSRTQGFLALFSGDTGEIRSEIRDQINTKVGEWKEEGKAEIVPGVLFIDEVHMLDIECFSYINRALEDDLAPVVIMASNRGNSRIRGTDYRSPHGLPLDFLDRVAIINTHSYTPEEIKQIISIRAQEEEVDVHPDALALLTKIGQEAGLRYASNLITTSQLVSAKRKAKQVEVSDVQRSFQLFYDPARSIKFVAESEKRLIGNTGAVDFSVGAAVSNGEEKMDLS.

Position 76–83 (76–83 (GPPSTGKT)) interacts with ATP.

Belongs to the RuvB family. In terms of assembly, may form heterododecamers with RVB1. Component of the SWR1 chromatin remodeling complex, the INO80 chromatin remodeling complex, and of the R2TP complex.

It is found in the nucleus. The catalysed reaction is ATP + H2O = ADP + phosphate + H(+). Functionally, DNA helicase which participates in several chromatin remodeling complexes, including the SWR1 and the INO80 complexes. The SWR1 complex mediates the ATP-dependent exchange of histone H2A for the H2A variant HZT1 leading to transcriptional regulation of selected genes by chromatin remodeling. The INO80 complex remodels chromatin by shifting nucleosomes and is involved in DNA repair. Also involved in pre-rRNA processing. The chain is RuvB-like helicase 2 (RVB2) from Gibberella zeae (strain ATCC MYA-4620 / CBS 123657 / FGSC 9075 / NRRL 31084 / PH-1) (Wheat head blight fungus).